Here is a 439-residue protein sequence, read N- to C-terminus: Chromosomal replication initiator protein DnaA (439 aa).

The tract at residues 1-75 (MESWSRCLER…GIREVVLAIG (75 aa)) is domain I, interacts with DnaA modulators. The interval 75 to 101 (GSRPKTTELTVPVDTTGRLSQTVPFNG) is domain II. The tract at residues 102-319 (NLDTHYNFDN…GALNTLVARA (218 aa)) is domain III, AAA+ region. Residues Gly-147, Gly-149, Lys-150, and Thr-151 each contribute to the ATP site. Residues 320-439 (NFTGRAVTIE…WDKLMRKFSE (120 aa)) form a domain IV, binds dsDNA region.

The protein belongs to the DnaA family. In terms of assembly, oligomerizes as a right-handed, spiral filament on DNA at oriC.

The protein resides in the cytoplasm. In terms of biological role, plays an essential role in the initiation and regulation of chromosomal replication. ATP-DnaA binds to the origin of replication (oriC) to initiate formation of the DNA replication initiation complex once per cell cycle. Binds the DnaA box (a 9 base pair repeat at the origin) and separates the double-stranded (ds)DNA. Forms a right-handed helical filament on oriC DNA; dsDNA binds to the exterior of the filament while single-stranded (ss)DNA is stabiized in the filament's interior. The ATP-DnaA-oriC complex binds and stabilizes one strand of the AT-rich DNA unwinding element (DUE), permitting loading of DNA polymerase. After initiation quickly degrades to an ADP-DnaA complex that is not apt for DNA replication. Binds acidic phospholipids. The protein is Chromosomal replication initiator protein DnaA of Xylella fastidiosa (strain Temecula1 / ATCC 700964).